A 2215-amino-acid chain; its full sequence is Unconventional myosin-VIIa (2215 aa).

The 677-residue stretch at 65 to 741 (HGVEDMIRLG…HDMLLEVERD (677 aa)) folds into the Myosin motor domain. 158–165 (GESGAGKT) provides a ligand contact to ATP. The segment at 632–639 (FVRCIKPN) is actin-binding. IQ domains lie at 745-765 (TDRVILLQKVIRGFKDRSNFL), 768-788 (KNAATLIQRHWRGHNCRKNYG), 791-811 (RLGFLRLQALHRSRKLHQQYR), 814-834 (RQRIIQFQARCRAYLVRKAFR), and 837-857 (LWAVLTVQAYARGMIARRLHQ). The tract at residues 858-935 (RLRAEYLWRL…LEQMERARHE (78 aa)) is SAH. Positions 1017–1253 (YTRRPLKQPL…PSWLELQATK (237 aa)) constitute a MyTH4 1 domain. The region spanning 1258–1602 (IMLPVTFMDG…LVVTFLEGLR (345 aa)) is the FERM 1 domain. Ser1569 is modified (phosphoserine). A Phosphothreonine modification is found at Thr1571. In terms of domain architecture, SH3 spans 1603–1672 (KRSKYVVALQ…PTDSVYVMPT (70 aa)). The 150-residue stretch at 1747–1896 (HTREPLKQAL…PHLVEVEAIQ (150 aa)) folds into the MyTH4 2 domain. The 304-residue stretch at 1902-2205 (IFHKVYFPDD…SYISQMLTAM (304 aa)) folds into the FERM 2 domain.

Belongs to the TRAFAC class myosin-kinesin ATPase superfamily. Myosin family. Might homodimerize in a two headed molecule through the formation of a coiled-coil rod. Identified in a complex with USH1C and USH1G. Interacts with MYRIP. Interacts with RPE65. Interacts with CIB2. May interact with CALM. Interacts with WHRN. Interacts with PLEKHB1 (via PH domain). Interacts with PCDH15. Interacts with TWF2. Interacts with USH1G. Interacts with MYH9. Interacts (via MyTH4-FERM domains) with cytoplasmic regions of ADGRV1 and USH2A. Interacts with PDZD7 (via MyTH4-FERM domains). Interacts with CALML4. In terms of tissue distribution, expressed in the pigment epithelium and the photoreceptor cells of the retina. Also found in kidney, liver, testis, cochlea, lymphocytes. Not expressed in brain.

Its subcellular location is the cytoplasm. It localises to the cell cortex. The protein resides in the cytoskeleton. The protein localises to the synapse. With respect to regulation, ATP hydrolysis is inhibited by Mg(2+), already at a concentration of 0.4 mM. Its function is as follows. Myosins are actin-based motor molecules with ATPase activity. Unconventional myosins serve in intracellular movements. Their highly divergent tails bind to membranous compartments, which are then moved relative to actin filaments. In the retina, plays an important role in the renewal of the outer photoreceptor disks. Plays an important role in the distribution and migration of retinal pigment epithelial (RPE) melanosomes and phagosomes, and in the regulation of opsin transport in retinal photoreceptors. In the inner ear, plays an important role in differentiation, morphogenesis and organization of cochlear hair cell bundles. Involved in hair-cell vesicle trafficking of aminoglycosides, which are known to induce ototoxicity. Motor protein that is a part of the functional network formed by USH1C, USH1G, CDH23 and MYO7A that mediates mechanotransduction in cochlear hair cells. Required for normal hearing. This Homo sapiens (Human) protein is Unconventional myosin-VIIa.